Here is a 187-residue protein sequence, read N- to C-terminus: Elongation factor P (187 aa).

Belongs to the elongation factor P family.

It is found in the cytoplasm. Its pathway is protein biosynthesis; polypeptide chain elongation. In terms of biological role, involved in peptide bond synthesis. Stimulates efficient translation and peptide-bond synthesis on native or reconstituted 70S ribosomes in vitro. Probably functions indirectly by altering the affinity of the ribosome for aminoacyl-tRNA, thus increasing their reactivity as acceptors for peptidyl transferase. This is Elongation factor P from Paenarthrobacter aurescens (strain TC1).